The following is a 224-amino-acid chain: Large ribosomal subunit protein uL4 (224 aa).

A disordered region spans residues 53 to 74; the sequence is RNRSEVSHSTKKPFKQKGTGNA.

The protein belongs to the universal ribosomal protein uL4 family. In terms of assembly, part of the 50S ribosomal subunit.

One of the primary rRNA binding proteins, this protein initially binds near the 5'-end of the 23S rRNA. It is important during the early stages of 50S assembly. It makes multiple contacts with different domains of the 23S rRNA in the assembled 50S subunit and ribosome. In terms of biological role, forms part of the polypeptide exit tunnel. In Chlamydia pneumoniae (Chlamydophila pneumoniae), this protein is Large ribosomal subunit protein uL4.